Here is a 445-residue protein sequence, read N- to C-terminus: Gamma-glutamyl phosphate reductase (445 aa).

It belongs to the gamma-glutamyl phosphate reductase family.

It is found in the cytoplasm. The catalysed reaction is L-glutamate 5-semialdehyde + phosphate + NADP(+) = L-glutamyl 5-phosphate + NADPH + H(+). The protein operates within amino-acid biosynthesis; L-proline biosynthesis; L-glutamate 5-semialdehyde from L-glutamate: step 2/2. Functionally, catalyzes the NADPH-dependent reduction of L-glutamate 5-phosphate into L-glutamate 5-semialdehyde and phosphate. The product spontaneously undergoes cyclization to form 1-pyrroline-5-carboxylate. The chain is Gamma-glutamyl phosphate reductase from Saccharopolyspora erythraea (strain ATCC 11635 / DSM 40517 / JCM 4748 / NBRC 13426 / NCIMB 8594 / NRRL 2338).